The sequence spans 467 residues: Chromosomal replication initiator protein DnaA (467 aa).

A domain I, interacts with DnaA modulators region spans residues Met-1–Ala-90. Residues Val-91 to Ser-130 are domain II. Residues Pro-98–Pro-111 are compositionally biased toward low complexity. Residues Pro-98 to Asn-119 are disordered. The tract at residues Asn-131–Ala-347 is domain III, AAA+ region. Residues Gly-175, Gly-177, Lys-178, and Thr-179 each coordinate ATP. Residues Asn-348–Ser-467 are domain IV, binds dsDNA.

Belongs to the DnaA family. As to quaternary structure, oligomerizes as a right-handed, spiral filament on DNA at oriC.

It localises to the cytoplasm. Its function is as follows. Plays an essential role in the initiation and regulation of chromosomal replication. ATP-DnaA binds to the origin of replication (oriC) to initiate formation of the DNA replication initiation complex once per cell cycle. Binds the DnaA box (a 9 base pair repeat at the origin) and separates the double-stranded (ds)DNA. Forms a right-handed helical filament on oriC DNA; dsDNA binds to the exterior of the filament while single-stranded (ss)DNA is stabiized in the filament's interior. The ATP-DnaA-oriC complex binds and stabilizes one strand of the AT-rich DNA unwinding element (DUE), permitting loading of DNA polymerase. After initiation quickly degrades to an ADP-DnaA complex that is not apt for DNA replication. Binds acidic phospholipids. The chain is Chromosomal replication initiator protein DnaA from Shigella sonnei (strain Ss046).